We begin with the raw amino-acid sequence, 174 residues long: RNA pyrophosphohydrolase (174 aa).

Residues 6-149 (GFRANVGIVI…KREVYRRAMK (144 aa)) enclose the Nudix hydrolase domain. Positions 38-59 (GGIDEGETAEQTMYRELYEEVG) match the Nudix box motif.

Belongs to the Nudix hydrolase family. RppH subfamily. It depends on a divalent metal cation as a cofactor.

In terms of biological role, accelerates the degradation of transcripts by removing pyrophosphate from the 5'-end of triphosphorylated RNA, leading to a more labile monophosphorylated state that can stimulate subsequent ribonuclease cleavage. The sequence is that of RNA pyrophosphohydrolase from Pseudoalteromonas atlantica (strain T6c / ATCC BAA-1087).